A 428-amino-acid polypeptide reads, in one-letter code: Glutamate-1-semialdehyde 2,1-aminomutase (428 aa).

Lys-265 bears the N6-(pyridoxal phosphate)lysine mark.

It belongs to the class-III pyridoxal-phosphate-dependent aminotransferase family. HemL subfamily. In terms of assembly, homodimer. Requires pyridoxal 5'-phosphate as cofactor.

The protein resides in the cytoplasm. It carries out the reaction (S)-4-amino-5-oxopentanoate = 5-aminolevulinate. The protein operates within porphyrin-containing compound metabolism; protoporphyrin-IX biosynthesis; 5-aminolevulinate from L-glutamyl-tRNA(Glu): step 2/2. In Proteus mirabilis (strain HI4320), this protein is Glutamate-1-semialdehyde 2,1-aminomutase.